The primary structure comprises 78 residues: DNA-directed RNA polymerase subunit omega (78 aa).

The protein belongs to the RNA polymerase subunit omega family. In cyanobacteria the RNAP catalytic core is composed of 2 alpha, 1 beta, 1 beta', 1 gamma and 1 omega subunit. When a sigma factor is associated with the core the holoenzyme is formed, which can initiate transcription.

It catalyses the reaction RNA(n) + a ribonucleoside 5'-triphosphate = RNA(n+1) + diphosphate. Promotes RNA polymerase assembly. Latches the N- and C-terminal regions of the beta' subunit thereby facilitating its interaction with the beta and alpha subunits. The chain is DNA-directed RNA polymerase subunit omega from Trichormus variabilis (strain ATCC 29413 / PCC 7937) (Anabaena variabilis).